The primary structure comprises 591 residues: General transcription and DNA repair factor IIH subunit TFB1-1 (591 aa).

BSD domains lie at 112 to 166 (STSS…GKDS) and 191 to 243 (RTNR…YLYS).

Belongs to the TFB1 family. Component of the 7-subunit TFIIH core complex composed of XPB, XPD, TFB1/GTF2H1, GTF2H2/P44, TFB4/GTF2H3, TFB2/GTF2H4 and TFB5/GTF2H5, which is active in NER. The core complex associates with the 3-subunit CDK-activating kinase (CAK) module composed of CYCH1/cyclin H1, CDKD and MAT1/At4g30820 to form the 10-subunit holoenzyme (holo-TFIIH) active in transcription.

Its subcellular location is the nucleus. Its function is as follows. Component of the general transcription and DNA repair factor IIH (TFIIH) core complex, which is involved in general and transcription-coupled nucleotide excision repair (NER) of damaged DNA and, when complexed to CAK, in RNA transcription by RNA polymerase II. In NER, TFIIH acts by opening DNA around the lesion to allow the excision of the damaged oligonucleotide and its replacement by a new DNA fragment. In transcription, TFIIH has an essential role in transcription initiation. When the pre-initiation complex (PIC) has been established, TFIIH is required for promoter opening and promoter escape. Phosphorylation of the C-terminal tail (CTD) of the largest subunit of RNA polymerase II by the kinase module CAK controls the initiation of transcription. The polypeptide is General transcription and DNA repair factor IIH subunit TFB1-1 (Arabidopsis thaliana (Mouse-ear cress)).